The sequence spans 831 residues: DNA ligase (831 aa).

NAD(+) is bound by residues 34-38 (DADYD), 83-84 (SL), and glutamate 114. The active-site N6-AMP-lysine intermediate is the lysine 116. NAD(+) contacts are provided by arginine 137, glutamate 174, lysine 291, and lysine 315. Cysteine 409, cysteine 412, cysteine 427, and cysteine 433 together coordinate Zn(2+). In terms of domain architecture, BRCT spans 749–831 (AHTAPLNGQS…LDFLEQYSAQ (83 aa)).

This sequence belongs to the NAD-dependent DNA ligase family. LigA subfamily. Requires Mg(2+) as cofactor. Mn(2+) serves as cofactor.

It catalyses the reaction NAD(+) + (deoxyribonucleotide)n-3'-hydroxyl + 5'-phospho-(deoxyribonucleotide)m = (deoxyribonucleotide)n+m + AMP + beta-nicotinamide D-nucleotide.. In terms of biological role, DNA ligase that catalyzes the formation of phosphodiester linkages between 5'-phosphoryl and 3'-hydroxyl groups in double-stranded DNA using NAD as a coenzyme and as the energy source for the reaction. It is essential for DNA replication and repair of damaged DNA. The protein is DNA ligase of Xylella fastidiosa (strain M12).